We begin with the raw amino-acid sequence, 367 residues long: Histidinol-phosphate aminotransferase 1 (367 aa).

An N6-(pyridoxal phosphate)lysine modification is found at K229.

This sequence belongs to the class-II pyridoxal-phosphate-dependent aminotransferase family. Histidinol-phosphate aminotransferase subfamily. In terms of assembly, homodimer. The cofactor is pyridoxal 5'-phosphate.

The catalysed reaction is L-histidinol phosphate + 2-oxoglutarate = 3-(imidazol-4-yl)-2-oxopropyl phosphate + L-glutamate. Its pathway is amino-acid biosynthesis; L-histidine biosynthesis; L-histidine from 5-phospho-alpha-D-ribose 1-diphosphate: step 7/9. In Mesorhizobium japonicum (strain LMG 29417 / CECT 9101 / MAFF 303099) (Mesorhizobium loti (strain MAFF 303099)), this protein is Histidinol-phosphate aminotransferase 1 (hisC1).